Reading from the N-terminus, the 776-residue chain is Ecdysone receptor (776 aa).

Residues 1–290 (MYRLNIVSTN…GPTPRQQEEL (290 aa)) are modulating. The segment at 199–283 (NEEWISSPSP…DAKKQKKGPT (85 aa)) is disordered. The segment covering 204-213 (SSPSPGSVPG) has biased composition (low complexity). Composition is skewed to polar residues over residues 227–245 (TTYT…STGS) and 261–270 (SPSSSLNGYT). The nuclear receptor DNA-binding region spans 288-363 (EELCLVCGDR…VGMRPECVVP (76 aa)). 2 consecutive NR C4-type zinc fingers follow at residues 291–311 (CLVC…CEGC) and 327–346 (CKFG…CQEC). The 237-residue stretch at 437–673 (NQMAVIYKLI…FLEEIWDVQD (237 aa)) folds into the NR LBD domain. The segment covering 679-688 (QAQMHSHGTQ) has biased composition (polar residues). Residues 679–776 (QAQMHSHGTQ…VPGLGMLDQV (98 aa)) form a disordered region. Over residues 689–745 (SSSSSSSSSSSSSNGSSNGNSSSNSNSSQHGPHPHPHGQQLTPNQQQHQQQHSQLQQ) the composition is skewed to low complexity.

Belongs to the nuclear hormone receptor family. NR1 subfamily. As to quaternary structure, heterodimer of USP and ECR. Only the heterodimer is capable of high-affinity binding to ecdysone. A peak level expression is seen in the fat body of previtellogenic female mosquitos at one and two days after eclosion, levels fall three-fold at three days posteclosion.

The protein resides in the nucleus. Receptor for ecdysone. Binds to ecdysone response elements (ECRES). The protein is Ecdysone receptor (EcR) of Aedes aegypti (Yellowfever mosquito).